Reading from the N-terminus, the 94-residue chain is Small ribosomal subunit protein bS20 (94 aa).

This sequence belongs to the bacterial ribosomal protein bS20 family.

In terms of biological role, binds directly to 16S ribosomal RNA. In Aquifex aeolicus (strain VF5), this protein is Small ribosomal subunit protein bS20.